Here is a 392-residue protein sequence, read N- to C-terminus: Phosphopentomutase (392 aa).

Positions 15, 287, 292, 328, 329, and 340 each coordinate Mn(2+).

This sequence belongs to the phosphopentomutase family. The cofactor is Mn(2+).

The protein localises to the cytoplasm. It carries out the reaction 2-deoxy-alpha-D-ribose 1-phosphate = 2-deoxy-D-ribose 5-phosphate. The catalysed reaction is alpha-D-ribose 1-phosphate = D-ribose 5-phosphate. The protein operates within carbohydrate degradation; 2-deoxy-D-ribose 1-phosphate degradation; D-glyceraldehyde 3-phosphate and acetaldehyde from 2-deoxy-alpha-D-ribose 1-phosphate: step 1/2. Isomerase that catalyzes the conversion of deoxy-ribose 1-phosphate (dRib-1-P) and ribose 1-phosphate (Rib-1-P) to deoxy-ribose 5-phosphate (dRib-5-P) and ribose 5-phosphate (Rib-5-P), respectively. This Syntrophotalea carbinolica (strain DSM 2380 / NBRC 103641 / GraBd1) (Pelobacter carbinolicus) protein is Phosphopentomutase.